A 625-amino-acid polypeptide reads, in one-letter code: MSFQCSSRSLCRSGGGGGGRNFSSGSAGLVSFQRRSTSSSMRRSGGGGGGRFSGGGFCGSSGGGFGSKSLVNLGGGRSISISVAGGGSSYGGGFGGGSYGGGSFGGGSFGGGVGGGFGGGGFGGGGFGSGGGFGGGRFGGGFGPVCPPGGIQEVTINQSLLQPLNVEVDPQIQKVKSQEREQIKSLNDKFASFIDKVRFLEQQNQVLQTKWELLQQVDTSTRTQNLDPFFESYISNLRRQVDSLKNDQSRMDSELKNMQDLVEEYRTKYEDEINKRTNAENEFVTIKKDVDSAYMNKAELQARVDNLQQDIDFFSTLYQMELSQMQTQISETNVVLSMDNNRTLDLDGIIAEVKAQYDSICQRSKAEAETFYQSKYEELQITAGKHGDSVKNTKMEISELNRVIQRLRSEIDSVKKQISQMQQNISDAEQRGEKALKDAQNKLNEIEDALTQAKEELTRLLRDYQELMNTKLALDMEIATYRKLLEGEEIRMSGECTPNVSVSVSTSHTSMSGTSSRGGGRYGSGGGGGGGTYGGGSRGGSYGGGSGGGSYGGCSSGGGSGGGSYGGGSSGGHRGGSGGGGGSSGGSYGGSSGGGRGGSSSGGGVKSSGSSSVKFVSTTYSRGTN.

Positions 1–12 (MSFQCSSRSLCR) are enriched in low complexity. The disordered stretch occupies residues 1–27 (MSFQCSSRSLCRSGGGGGGRNFSSGSA). Residues 1–178 (MSFQCSSRSL…DPQIQKVKSQ (178 aa)) form a head region. An Omega-N-methylarginine modification is found at R12. S23 and S26 each carry phosphoserine. Residue R51 is modified to Omega-N-methylarginine. S69 carries the post-translational modification Phosphoserine. Positions 171–319 (QIQKVKSQER…DIDFFSTLYQ (149 aa)) form a coiled coil. The segment at 179 to 214 (EREQIKSLNDKFASFIDKVRFLEQQNQVLQTKWELL) is coil 1A. Residues 179-492 (EREQIKSLND…KLLEGEEIRM (314 aa)) form the IF rod domain. The linker 1 stretch occupies residues 215-233 (QQVDTSTRTQNLDPFFESY). The interval 234–325 (ISNLRRQVDS…TLYQMELSQM (92 aa)) is coil 1B. N6,N6-dimethyllysine is present on K275. The segment at 326–349 (QTQISETNVVLSMDNNRTLDLDGI) is linker 12. Residues 350-488 (IAEVKAQYDS…ATYRKLLEGE (139 aa)) are coil 2. Residues 388–475 (DSVKNTKMEI…ELMNTKLALD (88 aa)) are a coiled coil. The tail stretch occupies residues 489-625 (EIRMSGECTP…VSTTYSRGTN (137 aa)). Disordered regions lie at residues 496 to 525 (CTPN…YGSG) and 560 to 625 (SGGG…RGTN). A compositionally biased stretch (low complexity) spans 500-515 (VSVSVSTSHTSMSGTS). Composition is skewed to gly residues over residues 516–525 (SRGGGRYGSG) and 560–606 (SGGG…GGVK). Omega-N-methylarginine occurs at positions 517, 574, and 596. Polar residues predominate over residues 613 to 625 (VKFVSTTYSRGTN).

This sequence belongs to the intermediate filament family. In terms of assembly, heterotetramer of two type I and two type II keratins. Heterodimer with KRT10. Two heterodimers of KRT1 and KRT10 form a heterotetramer. Forms a heterodimer with KRT14; the interaction is more abundant in the absence of KRT5. Interacts with ITGB1 in the presence of RACK1 and SRC, and with RACK1. Interacts with C1QBP; the association represents a cell surface kininogen receptor. Interacts with EPPK1; interaction is dependent of higher-order structure of intermediate filament. Undergoes deimination of some arginine residues (citrullination).

Its subcellular location is the cell membrane. It is found in the cytoplasm. May regulate the activity of kinases such as PKC and SRC via binding to integrin beta-1 (ITB1) and the receptor of activated protein C kinase 1 (RACK1). In complex with C1QBP is a high affinity receptor for kininogen-1/HMWK. This is Keratin, type II cytoskeletal 1 from Rattus norvegicus (Rat).